We begin with the raw amino-acid sequence, 490 residues long: GTPase Der (490 aa).

EngA-type G domains are found at residues 3-166 (PVVA…MDDV) and 203-376 (IKLA…DSST). Residues 9-16 (GRPNVGKS), 56-60 (DTGGI), 118-121 (NKTD), 209-216 (GRPNVGKS), 256-260 (DTAGV), and 321-324 (NKWD) contribute to the GTP site. In terms of domain architecture, KH-like spans 377–461 (RRVSTAMLTR…PIRIQFKEGE (85 aa)).

This sequence belongs to the TRAFAC class TrmE-Era-EngA-EngB-Septin-like GTPase superfamily. EngA (Der) GTPase family. Associates with the 50S ribosomal subunit.

Functionally, GTPase that plays an essential role in the late steps of ribosome biogenesis. In Citrobacter koseri (strain ATCC BAA-895 / CDC 4225-83 / SGSC4696), this protein is GTPase Der.